The following is a 66-amino-acid chain: Large ribosomal subunit protein bL31 (66 aa).

Residues Cys-16, Cys-18, Cys-36, and Cys-39 each coordinate Zn(2+).

This sequence belongs to the bacterial ribosomal protein bL31 family. Type A subfamily. In terms of assembly, part of the 50S ribosomal subunit. Requires Zn(2+) as cofactor.

In terms of biological role, binds the 23S rRNA. In Thermodesulfovibrio yellowstonii (strain ATCC 51303 / DSM 11347 / YP87), this protein is Large ribosomal subunit protein bL31.